The primary structure comprises 274 residues: 3-methyl-2-oxobutanoate hydroxymethyltransferase (274 aa).

The Mg(2+) site is built by D50 and D89. 3-methyl-2-oxobutanoate-binding positions include D50 to S51, D89, and K119. E121 lines the Mg(2+) pocket. The Proton acceptor role is filled by E188.

Belongs to the PanB family. In terms of assembly, homodecamer; pentamer of dimers. The cofactor is Mg(2+).

It is found in the cytoplasm. It carries out the reaction 3-methyl-2-oxobutanoate + (6R)-5,10-methylene-5,6,7,8-tetrahydrofolate + H2O = 2-dehydropantoate + (6S)-5,6,7,8-tetrahydrofolate. Its pathway is cofactor biosynthesis; (R)-pantothenate biosynthesis; (R)-pantoate from 3-methyl-2-oxobutanoate: step 1/2. Its function is as follows. Catalyzes the reversible reaction in which hydroxymethyl group from 5,10-methylenetetrahydrofolate is transferred onto alpha-ketoisovalerate to form ketopantoate. This chain is 3-methyl-2-oxobutanoate hydroxymethyltransferase, found in Methylorubrum extorquens (strain PA1) (Methylobacterium extorquens).